The primary structure comprises 178 residues: Putative metal-dependent hydrolase GTNG_0529 (178 aa).

Positions 68, 161, and 165 each coordinate Zn(2+).

It belongs to the metal hydrolase YfiT family. As to quaternary structure, homodimer. Zn(2+) serves as cofactor.

The protein resides in the cytoplasm. Possible metal-dependent hydrolase. In Geobacillus thermodenitrificans (strain NG80-2), this protein is Putative metal-dependent hydrolase GTNG_0529.